A 310-amino-acid chain; its full sequence is Serine/threonine-protein kinase pim-2 (310 aa).

The 261-residue stretch at 30–290 (YTMGNLLGSG…LEQILQHPWM (261 aa)) folds into the Protein kinase domain. ATP is bound by residues 36–44 (LGSGGFGSV) and Lys59. Residue Asp167 is the Proton acceptor of the active site.

Belongs to the protein kinase superfamily. CAMK Ser/Thr protein kinase family. PIM subfamily. Post-translationally, autophosphorylated.

The enzyme catalyses L-seryl-[protein] + ATP = O-phospho-L-seryl-[protein] + ADP + H(+). It catalyses the reaction L-threonyl-[protein] + ATP = O-phospho-L-threonyl-[protein] + ADP + H(+). In terms of biological role, proto-oncogene with serine/threonine kinase activity involved in cell survival and cell proliferation. The protein is Serine/threonine-protein kinase pim-2 (pim2) of Danio rerio (Zebrafish).